Reading from the N-terminus, the 700-residue chain is Myb-related protein B (700 aa).

3 HTH myb-type domains span residues 26-77 (RDSK…LRVL), 78-133 (NPDL…NPEV), and 134-184 (KKSC…KRKV). Positions 54–77 (WKFLASHFPNRTDQQCQYRWLRVL) form a DNA-binding region, H-T-H motif. K104 participates in a covalent cross-link: Glycyl lysine isopeptide (Lys-Gly) (interchain with G-Cter in SUMO2). 2 consecutive DNA-binding regions (H-T-H motif) follow at residues 106–129 (WTLIAKHLKGRLGKQCRERWHNHL) and 157–180 (WAEIAKMLPGRTDNAVKNHWNSTI). Residues K194 and K197 each participate in a glycyl lysine isopeptide (Lys-Gly) (interchain with G-Cter in SUMO2) cross-link. Disordered regions lie at residues 212 to 287 (LQSA…PETS) and 391 to 412 (PISPSTEVGGSGIGTPPSVLKR). A compositionally biased stretch (polar residues) spans 213–229 (QSAQPTEGQGSLLTNWP). At S241 the chain carries Phosphoserine. Position 266 is a phosphothreonine (T266). Residue K275 forms a Glycyl lysine isopeptide (Lys-Gly) (interchain with G-Cter in SUMO2) linkage. Phosphoserine occurs at positions 282 and 393. K411 participates in a covalent cross-link: Glycyl lysine isopeptide (Lys-Gly) (interchain with G-Cter in SUMO2). The Nuclear localization signal motif lies at 411–417 (KRQRKRR). 2 positions are modified to phosphothreonine; by CDK2: T440 and T444. Residues K447 and K482 each participate in a glycyl lysine isopeptide (Lys-Gly) (interchain with G-Cter in SUMO2) cross-link. A phosphothreonine; by CDK2 mark is found at T487 and T494. A Glycyl lysine isopeptide (Lys-Gly) (interchain with G-Cter in SUMO2) cross-link involves residue K499. T505 is subject to Phosphothreonine. K509 participates in a covalent cross-link: Glycyl lysine isopeptide (Lys-Gly) (interchain with G-Cter in SUMO2). Phosphothreonine; by CDK2 is present on T520. Glycyl lysine isopeptide (Lys-Gly) (interchain with G-Cter in SUMO2) cross-links involve residues K523, K533, and K546. The Bipartite nuclear localization signal motif lies at 564-584 (RPEKQKRKPGLRRSPIKKVRK). S577 is modified (phosphoserine; by CDK2). Glycyl lysine isopeptide (Lys-Gly) (interchain with G-Cter in SUMO2) cross-links involve residues K584, K596, K625, K639, and K648.

As to quaternary structure, component of the DREAM complex (also named LINC complex) at least composed of E2F4, E2F5, LIN9, LIN37, LIN52, LIN54, MYBL1, MYBL2, RBL1, RBL2, RBBP4, TFDP1 and TFDP2. The complex exists in quiescent cells where it represses cell cycle-dependent genes. It dissociates in S phase when LIN9, LIN37, LIN52 and LIN54 form a subcomplex that binds to MYBL22. Interacts with CCNF (via the Cyclin N-terminal domain). Phosphorylated by cyclin A/CDK2 during S-phase. Phosphorylation at Thr-520 is probably involved in transcriptional activity.

The protein localises to the nucleus. Functionally, transcription factor involved in the regulation of cell survival, proliferation, and differentiation. Transactivates the expression of the CLU gene. This is Myb-related protein B (MYBL2) from Homo sapiens (Human).